An 893-amino-acid chain; its full sequence is 104 kDa microneme/rhoptry antigen (893 aa).

Positions 1–19 (MKFLVLLFNILCLFPILGA) are cleaved as a signal peptide. Disordered regions lie at residues 492-666 (SKKK…FDPK), 681-799 (KTKE…PTGK), and 818-873 (KEHM…RKPD). Basic and acidic residues-rich tracts occupy residues 525 to 565 (SESK…EHKP) and 573 to 591 (KRPEFPKKSKSPKRPESPK). Residues 595-606 (RPVSPQRPVSPK) are compositionally biased toward low complexity. Composition is skewed to basic and acidic residues over residues 731–755 (EEVKTEDIHSETGEPEEPKRPDSPT), 788–797 (EAGRILRDPT), and 818–830 (KEHMGAEIRKIVV). A compositionally biased stretch (acidic residues) spans 831-841 (DDDGTEADDED). Positions 851–869 (STVRRRRPRPKKSSKSSKP) are enriched in basic residues. A lipid anchor (GPI-anchor amidated aspartate) is attached at aspartate 873. A propeptide spans 874–893 (SAFVPSIIFIFLVSLIVGIL) (removed in mature form).

The protein resides in the cell membrane. This is 104 kDa microneme/rhoptry antigen from Theileria annulata.